The chain runs to 566 residues: Class II hydrophobin FOXG_02748 (566 aa).

The first 22 residues, 1-22 (MKSKSIMAASTVMELALAQASA), serve as a signal peptide directing secretion. 4 disulfide bridges follow: Cys-497-Cys-546, Cys-507-Cys-537, Cys-508-Cys-520, and Cys-547-Cys-558.

This sequence belongs to the cerato-ulmin hydrophobin family. Homodimer. Homodimers further self-assemble to form highly ordered films at water-air interfaces through intermolecular interactions.

It localises to the secreted. It is found in the cell wall. In terms of biological role, aerial growth, conidiation, and dispersal of filamentous fungi in the environment rely upon a capability of their secreting small amphipathic proteins called hydrophobins (HPBs) with low sequence identity. Class I can self-assemble into an outermost layer of rodlet bundles on aerial cell surfaces, conferring cellular hydrophobicity that supports fungal growth, development and dispersal; whereas Class II form highly ordered films at water-air interfaces through intermolecular interactions but contribute nothing to the rodlet structure. FOXG_02748 is a class II hydrophobin that is likely required for plant colonization. This is Class II hydrophobin FOXG_02748 from Fusarium oxysporum f. sp. lycopersici (strain 4287 / CBS 123668 / FGSC 9935 / NRRL 34936) (Fusarium vascular wilt of tomato).